The chain runs to 805 residues: Transcription factor SFL1 (805 aa).

The span at 1–24 shows a compositional bias: low complexity; it reads MSHLVSSSLGTTTTATPTSRSPHT. The tract at residues 1 to 110 is disordered; sequence MSHLVSSSLG…NNNVSNNNST (110 aa). Residues 25–69 show a composition bias toward polar residues; the sequence is NHSTPYNQNSITSNRSSPVPKNSVNSRIIPQTMNPPIDMKSNNIL. The segment covering 71–85 has biased composition (basic and acidic residues); that stretch reads PEKDTDTSRGDHSES. Residues 86 to 110 are compositionally biased toward low complexity; that stretch reads KASSISSASGTTTTNNNNVSNNNST. A DNA-binding region spans residues 117-226; that stretch reads FIHKLYDMLH…LKNIKRRSSK (110 aa). Disordered stretches follow at residues 273-336, 438-483, 513-675, 691-746, and 759-805; these read MQSP…NQSP, QSNF…VAPQ, REDS…PAPQ, HQKS…SENH, and VSEL…RKLE. Low complexity predominate over residues 295–310; it reads QQQQQQQQQQQQQQQQ. Composition is skewed to polar residues over residues 454 to 480 and 533 to 556; these read HGNSVSSNYHLESTNVSRNPSTTNLNV and PSRNSSRILIEESTPTHPPTNFNP. A compositionally biased stretch (low complexity) spans 557-566; it reads QQSQSQSQVQ. 3 stretches are compositionally biased toward polar residues: residues 581-597, 604-614, and 622-635; these read ESTYSPLSHSSNKSQIL, VNHSPLVQQQQ, and NDSSVAPPSQSSLP. Residues 637–659 are compositionally biased toward low complexity; that stretch reads TRPLSRQQQQQQQTLHHPSTTSS. The segment covering 716–738 has biased composition (polar residues); that stretch reads PISSTAPTTMITSTSKPTSTSGA.

It belongs to the HSF family.

It localises to the nucleus. Its function is as follows. Transcription factor that plays a role of repressor of filamentous growth and flocculation. Antagonizes functions of SFL2 and FLO8. Plays a role in the hyphal repression induced by secreted factors like dodecanol by competitors such as Pseudomonas aeruginosa and Burkholderia cenocepacia. This is Transcription factor SFL1 (SFL1) from Candida albicans (strain SC5314 / ATCC MYA-2876) (Yeast).